Reading from the N-terminus, the 153-residue chain is Phosphoribosyl-AMP cyclohydrolase (153 aa).

D93 contacts Mg(2+). C94 is a Zn(2+) binding site. D95 and D97 together coordinate Mg(2+). The Zn(2+) site is built by C112 and C119.

The protein belongs to the PRA-CH family. In terms of assembly, homodimer. It depends on Mg(2+) as a cofactor. Zn(2+) is required as a cofactor.

The protein localises to the cytoplasm. It carries out the reaction 1-(5-phospho-beta-D-ribosyl)-5'-AMP + H2O = 1-(5-phospho-beta-D-ribosyl)-5-[(5-phospho-beta-D-ribosylamino)methylideneamino]imidazole-4-carboxamide. Its pathway is amino-acid biosynthesis; L-histidine biosynthesis; L-histidine from 5-phospho-alpha-D-ribose 1-diphosphate: step 3/9. Catalyzes the hydrolysis of the adenine ring of phosphoribosyl-AMP. This chain is Phosphoribosyl-AMP cyclohydrolase, found in Mesorhizobium japonicum (strain LMG 29417 / CECT 9101 / MAFF 303099) (Mesorhizobium loti (strain MAFF 303099)).